The sequence spans 561 residues: Glucose-6-phosphate isomerase (561 aa).

D-glucose 6-phosphate contacts are provided by residues 171-172 (GS), 222-227 (SKTFTT), Gln366, Glu370, His401, and Lys525. The active-site Proton donor is Glu370. Active-site residues include His401 and Lys525.

It belongs to the GPI family. Homodimer.

It localises to the cytoplasm. The protein localises to the cytosol. The catalysed reaction is alpha-D-glucose 6-phosphate = beta-D-fructose 6-phosphate. The protein operates within carbohydrate degradation; glycolysis; D-glyceraldehyde 3-phosphate and glycerone phosphate from D-glucose: step 2/4. In the cytoplasm, catalyzes the conversion of glucose-6-phosphate to fructose-6-phosphate, the second step in glycolysis, and the reverse reaction during gluconeogenesis. The chain is Glucose-6-phosphate isomerase (pgi-1) from Neurospora crassa (strain ATCC 24698 / 74-OR23-1A / CBS 708.71 / DSM 1257 / FGSC 987).